The following is a 361-amino-acid chain: Glutamate 5-kinase (361 aa).

Position 7 (Lys-7) interacts with ATP. Substrate is bound by residues Ser-47, Asp-134, and Asn-146. ATP contacts are provided by residues 166-167 (TD) and 209-215 (TGGMTTK). Positions 274 to 345 (LGTLQLDEGA…EAIETQMSTN (72 aa)) constitute a PUA domain.

Belongs to the glutamate 5-kinase family.

It localises to the cytoplasm. The enzyme catalyses L-glutamate + ATP = L-glutamyl 5-phosphate + ADP. Its pathway is amino-acid biosynthesis; L-proline biosynthesis; L-glutamate 5-semialdehyde from L-glutamate: step 1/2. Its function is as follows. Catalyzes the transfer of a phosphate group to glutamate to form L-glutamate 5-phosphate. This is Glutamate 5-kinase from Prochlorococcus marinus (strain MIT 9313).